We begin with the raw amino-acid sequence, 586 residues long: Asparagine synthetase [glutamine-hydrolyzing] 1 (586 aa).

The active-site For GATase activity is C2. One can recognise a Glutamine amidotransferase type-2 domain in the interval 2–185 (CGILAVLGCS…PGHLYSSRER (184 aa)). L-glutamine-binding positions include 50 to 54 (RLAIV), 75 to 77 (NGE), and D98. An Asparagine synthetase domain is found at 193-516 (PTWFSESIPS…PQNSARLTVP (324 aa)). ATP-binding positions include L231, V267, and 341-342 (SG).

It catalyses the reaction L-aspartate + L-glutamine + ATP + H2O = L-asparagine + L-glutamate + AMP + diphosphate + H(+). Its pathway is amino-acid biosynthesis; L-asparagine biosynthesis; L-asparagine from L-aspartate (L-Gln route): step 1/1. The sequence is that of Asparagine synthetase [glutamine-hydrolyzing] 1 (AS1) from Lotus japonicus (Lotus corniculatus var. japonicus).